The sequence spans 557 residues: Dihydroxy-acid dehydratase (557 aa).

Asp78 is a binding site for Mg(2+). [2Fe-2S] cluster is bound at residue Cys119. Positions 120 and 121 each coordinate Mg(2+). Residue Lys121 is modified to N6-carboxylysine. Cys191 serves as a coordination point for [2Fe-2S] cluster. Glu442 serves as a coordination point for Mg(2+). The Proton acceptor role is filled by Ser468.

This sequence belongs to the IlvD/Edd family. In terms of assembly, homodimer. Requires [2Fe-2S] cluster as cofactor. The cofactor is Mg(2+).

The catalysed reaction is (2R)-2,3-dihydroxy-3-methylbutanoate = 3-methyl-2-oxobutanoate + H2O. It catalyses the reaction (2R,3R)-2,3-dihydroxy-3-methylpentanoate = (S)-3-methyl-2-oxopentanoate + H2O. It functions in the pathway amino-acid biosynthesis; L-isoleucine biosynthesis; L-isoleucine from 2-oxobutanoate: step 3/4. Its pathway is amino-acid biosynthesis; L-valine biosynthesis; L-valine from pyruvate: step 3/4. In terms of biological role, functions in the biosynthesis of branched-chain amino acids. Catalyzes the dehydration of (2R,3R)-2,3-dihydroxy-3-methylpentanoate (2,3-dihydroxy-3-methylvalerate) into 2-oxo-3-methylpentanoate (2-oxo-3-methylvalerate) and of (2R)-2,3-dihydroxy-3-methylbutanoate (2,3-dihydroxyisovalerate) into 2-oxo-3-methylbutanoate (2-oxoisovalerate), the penultimate precursor to L-isoleucine and L-valine, respectively. This Syntrophobacter fumaroxidans (strain DSM 10017 / MPOB) protein is Dihydroxy-acid dehydratase.